The following is a 685-amino-acid chain: Mannan-binding lectin serine protease 2 (685 aa).

The N-terminal stretch at 1 to 19 is a signal peptide; the sequence is MRLLIVLGLLWSLVATLLG. Residues 20-137 form the CUB 1 domain; it reads SKWPEPVFGR…TGFEAFYAAE (118 aa). Ca(2+)-binding residues include Glu-67 and Asp-75. A disulfide bond links Cys-72 and Cys-90. Residue Asn-103 is glycosylated (N-linked (GlcNAc...) asparagine). Asp-120, Ser-122, Asn-123, Asp-138, and Val-139 together coordinate Ca(2+). The EGF-like; calcium-binding domain maps to 138–181; the sequence is DVDECRTSLGDSVPCDHYCHNYLGGYYCSCRVGYILHQNKHTCS. Intrachain disulfides connect Cys-152-Cys-165, Cys-167-Cys-180, Cys-184-Cys-211, and Cys-241-Cys-259. At Asn-158 the chain carries (3R)-3-hydroxyasparagine. Residues Tyr-159 and Gly-162 each coordinate Ca(2+). In terms of domain architecture, CUB 2 spans 184 to 296; sequence CSGQVFTGRS…TGWKIHYTST (113 aa). Asn-285 is a glycosylation site (N-linked (GlcNAc...) asparagine). Sushi domains are found at residues 298–363 and 364–431; these read QPCP…ECSI and IDCG…VCKP. Intrachain disulfides connect Cys-300-Cys-348, Cys-328-Cys-361, Cys-366-Cys-411, Cys-396-Cys-429, Cys-433-Cys-551, Cys-597-Cys-617, and Cys-628-Cys-659. Residues 444 to 683 form the Peptidase S1 domain; the sequence is IIGGQPAKPG…YIPWIENIIN (240 aa). Active-site charge relay system residues include His-482 and Asp-531. Ser-632 acts as the Charge relay system in catalysis. Asn-641 carries N-linked (GlcNAc...) asparagine glycosylation.

Belongs to the peptidase S1 family. As to quaternary structure, homodimer; disulfide-linked. Binds MBL2. Isoform 2 binds to MASP1. Binds SERPING1. In terms of processing, N-glycosylated. The iron and 2-oxoglutarate dependent 3-hydroxylation of aspartate and asparagine is (R) stereospecific within EGF domains. In terms of tissue distribution, highly expressed in liver. Secreted in plasma.

The protein resides in the secreted. It catalyses the reaction Selective cleavage after Arg-223 in complement component C2 (-Ser-Leu-Gly-Arg-|-Lys-Ile-Gln-Ile) and after Arg-76 in complement component C4 (-Gly-Leu-Gln-Arg-|-Ala-Leu-Glu-Ile).. Functionally, serum protease that plays an important role in the activation of the complement system via mannose-binding lectin. After activation by auto-catalytic cleavage it cleaves C2 and C4, leading to their activation and to the formation of C3 convertase. This chain is Mannan-binding lectin serine protease 2 (Masp2), found in Rattus norvegicus (Rat).